A 920-amino-acid chain; its full sequence is Periplasmic nitrate reductase (920 aa).

The tat-type signal signal peptide spans Met1–Ala29. A 4Fe-4S Mo/W bis-MGD-type domain is found at Trp35–Asp91. [4Fe-4S] cluster-binding residues include Cys42, Cys45, Cys49, and Cys77. Mo-bis(molybdopterin guanine dinucleotide) is bound by residues Lys79, Gln147, Asn172, Cys176, Trp209–Met216, Met416, Gln420, Asn526, Ser551–Asp552, Lys574, Asp601, and Thr810–Ser819. Residue Trp886 coordinates substrate. Positions 894 and 911 each coordinate Mo-bis(molybdopterin guanine dinucleotide).

This sequence belongs to the prokaryotic molybdopterin-containing oxidoreductase family. NasA/NapA/NarB subfamily. As to quaternary structure, component of the periplasmic nitrate reductase NapAB complex composed of NapA and NapB. [4Fe-4S] cluster serves as cofactor. It depends on Mo-bis(molybdopterin guanine dinucleotide) as a cofactor. In terms of processing, predicted to be exported by the Tat system. The position of the signal peptide cleavage has not been experimentally proven.

The protein localises to the periplasm. It catalyses the reaction 2 Fe(II)-[cytochrome] + nitrate + 2 H(+) = 2 Fe(III)-[cytochrome] + nitrite + H2O. In terms of biological role, catalytic subunit of the periplasmic nitrate reductase complex NapAB. Receives electrons from NapB and catalyzes the reduction of nitrate to nitrite. This Campylobacter hominis (strain ATCC BAA-381 / DSM 21671 / CCUG 45161 / LMG 19568 / NCTC 13146 / CH001A) protein is Periplasmic nitrate reductase.